Here is a 338-residue protein sequence, read N- to C-terminus: Adenylosuccinate synthetase (338 aa).

GTP is bound by residues 12 to 18 and 42 to 44; these read GDEGKGK and GHT. Asp-13 (proton acceptor) is an active-site residue. 2 residues coordinate Mg(2+): Asp-13 and Gly-42. Residues 13–16, 40–43, Thr-127, Arg-141, Gln-179, Thr-194, and Arg-256 each bind IMP; these read DEGK and NAGH. The Proton donor role is filled by His-43. A substrate-binding site is contributed by 252 to 258; the sequence is TVTGRRR. Residues Arg-258, 284–286, and 324–326 each bind GTP; these read CLD and STG.

The protein belongs to the adenylosuccinate synthetase family. As to quaternary structure, homodimer. Mg(2+) serves as cofactor.

The protein resides in the cytoplasm. The catalysed reaction is IMP + L-aspartate + GTP = N(6)-(1,2-dicarboxyethyl)-AMP + GDP + phosphate + 2 H(+). It functions in the pathway purine metabolism; AMP biosynthesis via de novo pathway; AMP from IMP: step 1/2. Plays an important role in the de novo pathway of purine nucleotide biosynthesis. Catalyzes the first committed step in the biosynthesis of AMP from IMP. This Methanococcus vannielii (strain ATCC 35089 / DSM 1224 / JCM 13029 / OCM 148 / SB) protein is Adenylosuccinate synthetase.